Consider the following 291-residue polypeptide: Pca regulon regulatory protein (291 aa).

Positions 1-22 (MSDETLVNDPVNPEPARPASAA) are disordered. In terms of domain architecture, HTH iclR-type spans 45-105 (MTSLARGLAV…SDGRTYSLLP (61 aa)). Positions 67-86 (IAQISHRTEIPRAAVRRCLH) form a DNA-binding region, H-T-H motif. The IclR-ED domain maps to 120–291 (LAISAQPYLD…SRDLCHQLFG (172 aa)).

In terms of biological role, positive regulator of all genes within the pca regulon, pcaBDC, pcaIJ and pcaF. Also required for the chemotactic response to aromatic compounds. The chain is Pca regulon regulatory protein (pcaR) from Pseudomonas putida (Arthrobacter siderocapsulatus).